The sequence spans 307 residues: HPr kinase/phosphorylase (307 aa).

Active-site residues include H136 and K157. ATP is bound at residue 151–158 (GESGIGKS). S158 is a binding site for Mg(2+). D175 serves as the catalytic Proton acceptor; for phosphorylation activity. Proton donor; for dephosphorylation activity. The interval 198-207 (LEVRGMGIID) is important for the catalytic mechanism of both phosphorylation and dephosphorylation. Position 199 (E199) interacts with Mg(2+). Residue R240 is part of the active site. Residues 261-266 (PIRPGR) form an important for the catalytic mechanism of dephosphorylation region.

It belongs to the HPrK/P family. As to quaternary structure, homohexamer. Mg(2+) is required as a cofactor.

The enzyme catalyses [HPr protein]-L-serine + ATP = [HPr protein]-O-phospho-L-serine + ADP + H(+). The catalysed reaction is [HPr protein]-O-phospho-L-serine + phosphate + H(+) = [HPr protein]-L-serine + diphosphate. Its function is as follows. Catalyzes the ATP- as well as the pyrophosphate-dependent phosphorylation of a specific serine residue in HPr, a phosphocarrier protein of the phosphoenolpyruvate-dependent sugar phosphotransferase system (PTS). HprK/P also catalyzes the pyrophosphate-producing, inorganic phosphate-dependent dephosphorylation (phosphorolysis) of seryl-phosphorylated HPr (P-Ser-HPr). The two antagonistic activities of HprK/P are regulated by several intracellular metabolites, which change their concentration in response to the absence or presence of rapidly metabolisable carbon sources (glucose, fructose, etc.) in the growth medium. Therefore, by controlling the phosphorylation state of HPr, HPrK/P is a sensor enzyme that plays a major role in the regulation of carbon metabolism and sugar transport: it mediates carbon catabolite repression (CCR), and regulates PTS-catalyzed carbohydrate uptake and inducer exclusion. In Clostridium perfringens (strain 13 / Type A), this protein is HPr kinase/phosphorylase.